We begin with the raw amino-acid sequence, 166 residues long: Phospholipase A2 inhibitor CgMIP-II (166 aa).

Positions 1–19 are cleaved as a signal peptide; the sequence is MRLILLSGLLLLGTFLANG. The 116-residue stretch at 46 to 161 folds into the C-type lectin domain; it reads LRYALMTVHN…CDDNLLVVCE (116 aa). Intrachain disulfides connect C83/C160 and C138/C152. N122 carries N-linked (GlcNAc...) asparagine glycosylation.

The protein belongs to the alpha-type phospholipase A2 inhibitor family. As to quaternary structure, homomer composed of 20-25-kDa subunits that form oligomers of 180 kDa. In terms of processing, N-glycosylated. The glycosidic chain may contain superficial sialic acid residues. In terms of tissue distribution, expressed by the liver.

It localises to the secreted. Selectively inhibits the toxic properties of myotoxin-II from the same venom (AC P81165). Does not inhibit PLA2, anti-coagulant and lethal activities of the basic myotoxin I from the same venom (AC P0DQP6), nor the different crotoxin forms (heterodimer or subunit B alone). Does not block the enzymatic activity of crude acidic PLA2 fractions from the same venom. The sequence is that of Phospholipase A2 inhibitor CgMIP-II from Cerrophidion godmani (Porthidium godmani).